Reading from the N-terminus, the 298-residue chain is Syntaxin-125 (298 aa).

Residue methionine 1 is modified to N-acetylmethionine. The Cytoplasmic segment spans residues 1–274 (MNDLFSNSFK…KSSRKWTCYA (274 aa)). Residues 25 to 155 (TMNLDKFFED…NEYKETVERR (131 aa)) are a coiled coil. The region spanning 198–260 (ISEIQERHDA…RRGTDQLQDA (63 aa)) is the t-SNARE coiled-coil homology domain. A helical; Anchor for type IV membrane protein transmembrane segment spans residues 275-295 (IILFIVIFILLLIPLLPHIML). Residues 296 to 298 (MLK) lie on the Vesicular side of the membrane.

It belongs to the syntaxin family. Part of the t-SNARE complex.

The protein resides in the membrane. Functionally, vesicle trafficking protein that functions in the secretory pathway. This Arabidopsis thaliana (Mouse-ear cress) protein is Syntaxin-125 (SYP125).